Reading from the N-terminus, the 526-residue chain is Lysine--tRNA ligase (526 aa).

Positions 30 to 38 (PSGYVHIGN) match the 'HIGH' region motif. Zn(2+) contacts are provided by D95, C99, H100, H106, C177, and C199. The 'KMSKS' region signature appears at 280–284 (KMSGS).

It belongs to the class-I aminoacyl-tRNA synthetase family. The cofactor is Zn(2+).

Its subcellular location is the cytoplasm. The catalysed reaction is tRNA(Lys) + L-lysine + ATP = L-lysyl-tRNA(Lys) + AMP + diphosphate. The chain is Lysine--tRNA ligase (lysS) from Thermococcus kodakarensis (strain ATCC BAA-918 / JCM 12380 / KOD1) (Pyrococcus kodakaraensis (strain KOD1)).